A 250-amino-acid chain; its full sequence is 7-cyano-7-deazaguanine synthase (250 aa).

Residue 28-38 coordinates ATP; it reads LSGGLDSATCV. 4 residues coordinate Zn(2+): cysteine 213, cysteine 226, cysteine 229, and cysteine 232.

The protein belongs to the QueC family. Zn(2+) is required as a cofactor.

The enzyme catalyses 7-carboxy-7-deazaguanine + NH4(+) + ATP = 7-cyano-7-deazaguanine + ADP + phosphate + H2O + H(+). The protein operates within purine metabolism; 7-cyano-7-deazaguanine biosynthesis. Catalyzes the ATP-dependent conversion of 7-carboxy-7-deazaguanine (CDG) to 7-cyano-7-deazaguanine (preQ(0)). This chain is 7-cyano-7-deazaguanine synthase, found in Rhodopirellula baltica (strain DSM 10527 / NCIMB 13988 / SH1).